A 73-amino-acid chain; its full sequence is Large ribosomal subunit protein bL31 (73 aa).

It belongs to the bacterial ribosomal protein bL31 family. Type A subfamily. In terms of assembly, part of the 50S ribosomal subunit.

In terms of biological role, binds the 23S rRNA. The protein is Large ribosomal subunit protein bL31 of Rhizobium etli (strain CIAT 652).